A 195-amino-acid chain; its full sequence is Type II secretion system protein J (195 aa).

Positions 1–7 (MINRQQG) are cleaved as a propeptide — leader sequence. Phe8 carries the N-methylphenylalanine modification. The chain crosses the membrane as a helical span at residues 8-29 (FTLLEVMAALAIFSMLSVLAFM).

The protein belongs to the GSP J family. In terms of assembly, type II secretion is composed of four main components: the outer membrane complex, the inner membrane complex, the cytoplasmic secretion ATPase and the periplasm-spanning pseudopilus. Interacts with core component GspG. Cleaved by prepilin peptidase. Post-translationally, methylated by prepilin peptidase at the amino group of the N-terminal phenylalanine once the leader sequence is cleaved by prepilin peptidase.

The protein resides in the cell inner membrane. Functionally, component of the type II secretion system required for the energy-dependent secretion of extracellular factors such as proteases and toxins from the periplasm. Part of the pseudopilus tip complex that is critical for the recognition and binding of secretion substrates. The polypeptide is Type II secretion system protein J (gspJ) (Escherichia coli (strain K12)).